The primary structure comprises 244 residues: RNA transcription, translation and transport factor protein (244 aa).

3 positions are modified to N6-acetyllysine: lysine 20, lysine 62, and lysine 98.

This sequence belongs to the RTRAF family. As to quaternary structure, homodimer. Interacts with FAM98A (via N- and C-terminus). Interacts with NIN; which may prevent phosphorylation of NIN. Interacts with POLR2A. Component of a tRNA-splicing ligase complex.

It is found in the nucleus. It localises to the cytoplasm. The protein localises to the cytosol. Its subcellular location is the perinuclear region. The protein resides in the cytoskeleton. It is found in the microtubule organizing center. It localises to the centrosome. Its function is as follows. RNA-binding protein involved in modulation of mRNA transcription by Polymerase II. Component of the tRNA-splicing ligase complex and is required for tRNA ligation. May be required for RNA transport. This chain is RNA transcription, translation and transport factor protein, found in Mus musculus (Mouse).